The sequence spans 1112 residues: Lysylphosphatidylglycerol biosynthesis bifunctional protein LysX (1112 aa).

Positions 1 to 613 (MTLTSPPRTR…VLHHDGTAPD (613 aa)) are phosphatidylglycerol lysyltransferase. A run of 7 helical transmembrane segments spans residues 18 to 38 (VPAA…IASV), 60 to 80 (FPDT…ALAA), 84 to 104 (IAWW…VADL), 118 to 138 (VIGL…RPLF), 152 to 172 (GVLA…LELF), 209 to 229 (VNAL…IVLF), and 308 to 328 (AWLA…ASVG). The interval 614–1112 (MSGLRTDTAD…TLPFPLARPR (499 aa)) is lysine--tRNA ligase. The segment at residues 675-748 (VAGRVLRIRD…GTRSLLVRHW (74 aa)) is a DNA-binding region (OB). Mg(2+)-binding residues include D1024 and E1031.

It in the N-terminal section; belongs to the LPG synthetase family. This sequence in the C-terminal section; belongs to the class-II aminoacyl-tRNA synthetase family. Mg(2+) serves as cofactor.

It is found in the cell membrane. It carries out the reaction tRNA(Lys) + L-lysine + ATP = L-lysyl-tRNA(Lys) + AMP + diphosphate. The enzyme catalyses L-lysyl-tRNA(Lys) + a 1,2-diacyl-sn-glycero-3-phospho-(1'-sn-glycerol) = a 1,2-diacyl-sn-glycero-3-phospho-1'-(3'-O-L-lysyl)-sn-glycerol + tRNA(Lys). In terms of biological role, catalyzes the production of L-lysyl-tRNA(Lys)transfer and the transfer of a lysyl group from L-lysyl-tRNA(Lys) to membrane-bound phosphatidylglycerol (PG), which produces lysylphosphatidylglycerol (LPG), one of the components of the bacterial membrane with a positive net charge. LPG synthesis contributes to the resistance to cationic antimicrobial peptides (CAMPs) and likely protects M.tuberculosis against the CAMPs produced by competiting microorganisms (bacteriocins). In fact, the modification of anionic phosphatidylglycerol with positively charged L-lysine results in repulsion of the peptides. The chain is Lysylphosphatidylglycerol biosynthesis bifunctional protein LysX (lysX) from Mycobacterium sp. (strain KMS).